The primary structure comprises 522 residues: Thiamine biosynthetic bifunctional enzyme TH1, chloroplastic (522 aa).

A chloroplast-targeting transit peptide spans 1-36 (MNSLGGIRSWPANWRSTTASMTTTESVRKVPQVLTV). 4-amino-2-methyl-5-(diphosphooxymethyl)pyrimidine-binding positions include 345–349 (QLREK) and Asn-377. Mg(2+) is bound by residues Asp-378 and Asp-397. A 4-amino-2-methyl-5-(diphosphooxymethyl)pyrimidine-binding site is contributed by Ser-416. 442-444 (TNT) provides a ligand contact to 2-[(2R,5Z)-2-carboxy-4-methylthiazol-5(2H)-ylidene]ethyl phosphate. Lys-445 contacts 4-amino-2-methyl-5-(diphosphooxymethyl)pyrimidine. 2-[(2R,5Z)-2-carboxy-4-methylthiazol-5(2H)-ylidene]ethyl phosphate is bound by residues Gly-472 and 495–496 (VS).

This sequence belongs to the thiamine-phosphate synthase family. Mg(2+) serves as cofactor.

The protein resides in the plastid. Its subcellular location is the chloroplast. The catalysed reaction is 2-[(2R,5Z)-2-carboxy-4-methylthiazol-5(2H)-ylidene]ethyl phosphate + 4-amino-2-methyl-5-(diphosphooxymethyl)pyrimidine + 2 H(+) = thiamine phosphate + CO2 + diphosphate. It catalyses the reaction 2-(2-carboxy-4-methylthiazol-5-yl)ethyl phosphate + 4-amino-2-methyl-5-(diphosphooxymethyl)pyrimidine + 2 H(+) = thiamine phosphate + CO2 + diphosphate. It carries out the reaction 4-methyl-5-(2-phosphooxyethyl)-thiazole + 4-amino-2-methyl-5-(diphosphooxymethyl)pyrimidine + H(+) = thiamine phosphate + diphosphate. The enzyme catalyses 4-amino-5-hydroxymethyl-2-methylpyrimidine + ATP = 4-amino-2-methyl-5-(phosphooxymethyl)pyrimidine + ADP + H(+). It participates in cofactor biosynthesis; thiamine diphosphate biosynthesis; thiamine phosphate from 4-amino-2-methyl-5-diphosphomethylpyrimidine and 4-methyl-5-(2-phosphoethyl)-thiazole: step 1/1. Its pathway is cofactor biosynthesis; thiamine diphosphate biosynthesis; 4-amino-2-methyl-5-diphosphomethylpyrimidine from 5-amino-1-(5-phospho-D-ribosyl)imidazole: step 2/3. In terms of biological role, essential for thiamine biosynthesis. Bifunctional enzyme that catalyzes the phosphorylation of hydroxymethylpyrimidine phosphate (HMP-P) to HMP-PP and condenses 4-methyl-5-(beta-hydroxyethyl)thiazole monophosphate (THZ-P) and 2-methyl-4-amino-5-hydroxymethyl pyrimidine pyrophosphate (HMP-PP) to form thiamine monophosphate (TMP). This chain is Thiamine biosynthetic bifunctional enzyme TH1, chloroplastic (TH1), found in Arabidopsis thaliana (Mouse-ear cress).